The sequence spans 926 residues: Serine/threonine-protein kinase SIK2 (926 aa).

Residues 20 to 271 (YDIEGTLGKG…IAQIKEHKWM (252 aa)) form the Protein kinase domain. The residue at position 25 (Thr-25) is a Phosphothreonine. ATP contacts are provided by residues 26–34 (LGKGNFAVV) and Lys-49. Lys-53 is modified (N6-acetyllysine; by EP300). Catalysis depends on Asp-142, which acts as the Proton acceptor. Thr-175 carries the phosphothreonine; by LKB1 modification. In terms of domain architecture, UBA spans 295-335 (EFNEQVLRLMHSLGIDQQKTIESLQNKSYNHFAAIYFLLVE). At Thr-484 the chain carries Phosphothreonine. 2 positions are modified to phosphoserine: Ser-534 and Ser-587. Low complexity-rich tracts occupy residues 644-659 (SSCP…ESVS) and 742-756 (SSYP…LPRQ). 3 disordered regions span residues 644–666 (SSCP…ASVH), 742–776 (SSYP…PLSP), and 801–896 (PLPS…SSYD). The segment covering 765-774 (APPFSLTQPL) has biased composition (polar residues). Over residues 822–834 (QPPPPPPPPPPRQ) the composition is skewed to pro residues.

The protein belongs to the protein kinase superfamily. CAMK Ser/Thr protein kinase family. SNF1 subfamily. In terms of assembly, interacts with and phosphorylates TORC2/CRTC2. It depends on Mg(2+) as a cofactor. Post-translationally, phosphorylated at Thr-175 by STK11/LKB1 in complex with STE20-related adapter-alpha (STRADA) pseudo kinase and CAB39. Phosphorylated at Thr-484 in response to insulin in adipocytes. In terms of processing, acetylation at Lys-53 inhibits kinase activity. Deacetylated by HDAC6.

The protein resides in the cytoplasm. Its subcellular location is the endoplasmic reticulum membrane. The enzyme catalyses L-seryl-[protein] + ATP = O-phospho-L-seryl-[protein] + ADP + H(+). The catalysed reaction is L-threonyl-[protein] + ATP = O-phospho-L-threonyl-[protein] + ADP + H(+). Its activity is regulated as follows. Activated by phosphorylation on Thr-175. In terms of biological role, serine/threonine-protein kinase that plays a role in many biological processes such as fatty acid oxidation, autophagy, immune response or glucose metabolism. Phosphorylates 'Ser-794' of IRS1 in insulin-stimulated adipocytes, potentially modulating the efficiency of insulin signal transduction. Inhibits CREB activity by phosphorylating and repressing TORCs, the CREB-specific coactivators. Phosphorylates EP300 and thus inhibits its histone acetyltransferase activity. In turn, regulates the DNA-binding ability of several transcription factors such as PPARA or MLXIPL. Also plays a role in thymic T-cell development. The protein is Serine/threonine-protein kinase SIK2 (SIK2) of Homo sapiens (Human).